The following is a 353-amino-acid chain: Protein RecA (353 aa).

Residue Gly73–Thr80 participates in ATP binding.

The protein belongs to the RecA family.

Its subcellular location is the cytoplasm. Can catalyze the hydrolysis of ATP in the presence of single-stranded DNA, the ATP-dependent uptake of single-stranded DNA by duplex DNA, and the ATP-dependent hybridization of homologous single-stranded DNAs. It interacts with LexA causing its activation and leading to its autocatalytic cleavage. This is Protein RecA from Bordetella avium (strain 197N).